The chain runs to 488 residues: MRVTVTAGDPLSTATDLLVLGLWEEESLPSPLDDLIEPGDWSGKAKQTLLIYPRGALPARRVLLIGLGKRSAPDLDQMREVAAIATQRARELKVDRFAFVIPVLSEQTPETVAAAITEGSLLGSYRFLEYKSDLKPEDRREVDELTLLAPVDAVDEAARGIARGGAVARGVNLARDLANLPPNDLTPARLAERARELAVAFDLPITVLGPAEMREQGFGGILAVGQGSVNEPRFIVIDYGAQYADAPTICLAGKGMTFDSGGISIKPAENMDAMKMDMSGAAAVLGALHAIAELRLPLHVVALIGAAENMPGGSAYRPGDILKTLSGKMIEVLNTDAEGRIVLADVLTYAQRYHPSAIIDLATLTGAISVALGPHAIGLFANDDALAQRLVRAGEAAGERAWQLPLWQPYREMVKSEIADVRNATGRQAGAITAAAFLNAFVGDYPWAHLDIAGTAWTDSKPKAYQPKGATGVGVRLLLQALRDWTQA.

Mn(2+)-binding residues include lysine 254 and aspartate 259. Lysine 266 is a catalytic residue. The Mn(2+) site is built by aspartate 277, aspartate 336, and glutamate 338. Arginine 340 is a catalytic residue.

It belongs to the peptidase M17 family. It depends on Mn(2+) as a cofactor.

It localises to the cytoplasm. It carries out the reaction Release of an N-terminal amino acid, Xaa-|-Yaa-, in which Xaa is preferably Leu, but may be other amino acids including Pro although not Arg or Lys, and Yaa may be Pro. Amino acid amides and methyl esters are also readily hydrolyzed, but rates on arylamides are exceedingly low.. The enzyme catalyses Release of an N-terminal amino acid, preferentially leucine, but not glutamic or aspartic acids.. Presumably involved in the processing and regular turnover of intracellular proteins. Catalyzes the removal of unsubstituted N-terminal amino acids from various peptides. The sequence is that of Probable cytosol aminopeptidase from Roseiflexus castenholzii (strain DSM 13941 / HLO8).